A 388-amino-acid chain; its full sequence is 4-hydroxy-3-methylbut-2-en-1-yl diphosphate synthase (flavodoxin) (388 aa).

Positions 281, 284, 316, and 323 each coordinate [4Fe-4S] cluster.

It belongs to the IspG family. [4Fe-4S] cluster is required as a cofactor.

It catalyses the reaction (2E)-4-hydroxy-3-methylbut-2-enyl diphosphate + oxidized [flavodoxin] + H2O + 2 H(+) = 2-C-methyl-D-erythritol 2,4-cyclic diphosphate + reduced [flavodoxin]. Its pathway is isoprenoid biosynthesis; isopentenyl diphosphate biosynthesis via DXP pathway; isopentenyl diphosphate from 1-deoxy-D-xylulose 5-phosphate: step 5/6. Its function is as follows. Converts 2C-methyl-D-erythritol 2,4-cyclodiphosphate (ME-2,4cPP) into 1-hydroxy-2-methyl-2-(E)-butenyl 4-diphosphate. The protein is 4-hydroxy-3-methylbut-2-en-1-yl diphosphate synthase (flavodoxin) of Arthrobacter sp. (strain FB24).